A 352-amino-acid polypeptide reads, in one-letter code: Heat-inducible transcription repressor HrcA (352 aa).

The protein belongs to the HrcA family.

Functionally, negative regulator of class I heat shock genes (grpE-dnaK-dnaJ and groELS operons). Prevents heat-shock induction of these operons. The sequence is that of Heat-inducible transcription repressor HrcA from Lactobacillus gasseri (strain ATCC 33323 / DSM 20243 / BCRC 14619 / CIP 102991 / JCM 1131 / KCTC 3163 / NCIMB 11718 / NCTC 13722 / AM63).